The primary structure comprises 303 residues: Paired immunoglobulin-like type 2 receptor alpha (303 aa).

The signal sequence occupies residues 1–19 (MGRPLLLPLLPLLLPPAFL). Topologically, residues 20–197 (QPSGSTGSGP…DSWHISLETA (178 aa)) are extracellular. Residues 32-150 (LYGVTQPKHL…SIEGTKLSIT (119 aa)) enclose the Ig-like V-type domain. An N-linked (GlcNAc...) asparagine glycan is attached at N100. Residues 198–218 (VGVAVAVTVLGIMILGLICLL) traverse the membrane as a helical segment. Residues 219-303 (RWRRRKGQQR…NETLYSVLKA (85 aa)) lie on the Cytoplasmic side of the membrane. A disordered region spans residues 226–296 (QQRTKATTPA…RPLKSPQNET (71 aa)). Short sequence motifs (ITIM motif) lie at residues 267–272 (IVYASL) and 296–301 (TLYSVL).

Monomer. Interacts with PTPN6/SHP-1 and PTPN11/SHP-2 upon tyrosine phosphorylation. In terms of assembly, (Microbial infection) Interacts with herpes simplex virus 1 glycoprotein B. In terms of processing, according to PubMed:10660620, N- and O-glycosylated. According to PubMed:10903717, only N-glycosylated. Post-translationally, phosphorylated on tyrosine residues. Predominantly detected in hemopoietic tissues and is expressed by monocytes, macrophages, and granulocytes, but not by lymphocytes. Also strongly expressed by dendritic cells (DC); preferentially by CD14+/CD1a- DC derived from CD34+ progenitors. Also expressed by CD11c+ blood and tonsil DC, but not by CD11c- DC precursors.

The protein resides in the cell membrane. The protein localises to the secreted. Its function is as follows. Paired receptors consist of highly related activating and inhibitory receptors and are widely involved in the regulation of the immune system. PILRA is thought to act as a cellular signaling inhibitory receptor by recruiting cytoplasmic phosphatases like PTPN6/SHP-1 and PTPN11/SHP-2 via their SH2 domains that block signal transduction through dephosphorylation of signaling molecules. Receptor for PIANP. Functionally, (Microbial infection) Acts as an entry co-receptor for herpes simplex virus 1. In Homo sapiens (Human), this protein is Paired immunoglobulin-like type 2 receptor alpha (PILRA).